A 1287-amino-acid polypeptide reads, in one-letter code: MHPDLGPLCTLLYVTLTILCSSVSSDLAPYFTSEPLSAVQKLGGPVVLHCSAQPVTTRISWLHNGKTLDGNLEHVKIHQGTLTILSLNSSLLGYYQCLANNSIGAIVSGPATVSVAVLGDFGSSTKHVITAEEKSAGFIGCRVPESNPKAEVRYKIRGKWLEHSTENYLILPSGNLQILNVSLEDKGSYKCAAYNPVTHQLKVEPIGRKLLVSRPSSDDVHILHPTHSQALAVLSRSPVTLECVVSGVPAPQVYWLKDGQDIAPGSNWRRLYSHLATDSVDPADSGNYSCMAGNKSGDVKYVTYMVNVLEHASISKGLQDQIVSLGATVHFTCDVHGNPAPNCTWFHNAQPIHPSARHLTAGNGLKISGVTVEDVGMYQCVADNGIGFMHSTGRLEIENDGGFKPVIITAPVSAKVADGDFVTLSCNASGLPVPVIRWYDSHGLITSHPSQVLRSKSRKSQLSRPEGLNLEPVYFVLSQAGASSLHIQAVTQEHAGKYICEAANEHGTTQAEASLMVVPFETNTKAETVTLPDAAQNDDRSKRDGSETGLLSSFPVKVHPSAVESAPEKNASGISVPDAPIILSPPQTHTPDTYNLVWRAGKDGGLPINAYFVKYRKLDDGVGMLGSWHTVRVPGSENELHLAELEPSSLYEVLMVARSAAGEGQPAMLTFRTSKEKTASSKNTQASSPPVGIPKYPVVSEAANNNFGVVLTDSSRHSGVPEAPDRPTISTASETSVYVTWIPRANGGSPITAFKVEYKRMRTSNWLVAAEDIPPSKLSVEVRSLEPGSTYKFRVIAINHYGESFRSSASRPYQVVGFPNRFSSRPITGPHIAYTEAVSDTQIMLKWTYIPSSNNNTPIQGFYIYYRPTDSDNDSDYKRDVVEGSKQWHMIGHLQPETSYDIKMQCFNEGGESEFSNVMICETKVKRVPGASEYPVKDLSTPPNSLGSGGNVGPATSPARSSDMLYLIVGCVLGVMVLILMVFIAMCLWKNRQQNTIQKYDPPGYLYQGSDMNGQMVDYTTLSGASQINGNVHGGFLTNGGLSSGYSHLHHKVPNAVNGIVNGSLNGGLYSGHSNSLTRTHVDFEHPHHLVNGGGMYTAVPQIDPLECVNCRNCRNNNRCFTKTNSTFSSSPPPVVPVVAPYPQDGLEMKPLSHVKVPVCLTSAVPDCGQLPEESVKDNVEPVPTQRTCCQDIVNDVSSDGSEDPAEFSRGQEGMINLRIPDHLQLAKSCVWEGDSCAHSETEINIVSWNALILPPVPEGCAEKTMWSPPGIPLDSPTEVLQQPRET.

Positions 1–25 (MHPDLGPLCTLLYVTLTILCSSVSS) are cleaved as a signal peptide. The Extracellular portion of the chain corresponds to 26 to 963 (DLAPYFTSEP…PATSPARSSD (938 aa)). Ig-like C2-type domains follow at residues 29-114 (PYFT…ATVS), 120-204 (DFGS…LKVE), 225-303 (PTHS…KYVT), 310-396 (EHAS…GRLE), and 405-516 (PVII…ASLM). Cys50 and Cys97 form a disulfide bridge. 7 N-linked (GlcNAc...) asparagine glycosylation sites follow: Asn88, Asn100, Asn180, Asn287, Asn294, Asn342, and Asn427. Intrachain disulfides connect Cys141-Cys191 and Cys243-Cys290. 2 cysteine pairs are disulfide-bonded: Cys333–Cys380 and Cys426–Cys500. The disordered stretch occupies residues 531-553 (LPDAAQNDDRSKRDGSETGLLSS). The segment covering 537–546 (NDDRSKRDGS) has biased composition (basic and acidic residues). N-linked (GlcNAc...) asparagine glycosylation occurs at Asn570. Fibronectin type-III domains are found at residues 579–677 (APII…SKEK), 723–821 (APDR…FPNR), and 826–926 (PITG…TKVK). Residue Asn873 is glycosylated (N-linked (GlcNAc...) asparagine). Residues 933 to 955 (EYPVKDLSTPPNSLGSGGNVGPA) are disordered. Residues 964–984 (MLYLIVGCVLGVMVLILMVFI) form a helical membrane-spanning segment. The Cytoplasmic portion of the chain corresponds to 985 to 1287 (AMCLWKNRQQ…TEVLQQPRET (303 aa)). The interval 1268–1287 (SPPGIPLDSPTEVLQQPRET) is disordered.

In terms of assembly, part of a complex that contains BOC, CDON, NEO1, cadherins and CTNNB1. Interacts with NTN3. Interacts with PTCH1. Interacts with GAS1. Interacts with DHH, IHH and SHH. In terms of processing, N-glycosylated.

It is found in the cell membrane. In terms of biological role, component of a cell-surface receptor complex that mediates cell-cell interactions between muscle precursor cells. Promotes differentiation of myogenic cells. This is Cell adhesion molecule-related/down-regulated by oncogenes (CDON) from Homo sapiens (Human).